A 232-amino-acid chain; its full sequence is MSIAHSIRAQIPPIHPEGYPFIGGFAFASLILFWLWAPLGWIGVVLTIWCALFFRDPVRTTPVREGLVIAPADGRVSMVTPVVPPAELGLGDQPLMRISIFMSVFNCHVNRSPVAGRIERIAYRPGKFINAELDKASEDNERNSLVISTPAGRIGVVQIAGLVARRIVSFVREGESLAAGQRFGLIRFGSRLDVFLPEGGKPLVSVGQTAVAGETVLADFQIGDGGRVYRTD.

The active-site Schiff-base intermediate with substrate; via pyruvic acid is the serine 190. At serine 190 the chain carries Pyruvic acid (Ser); by autocatalysis.

This sequence belongs to the phosphatidylserine decarboxylase family. PSD-A subfamily. As to quaternary structure, heterodimer of a large membrane-associated beta subunit and a small pyruvoyl-containing alpha subunit. Pyruvate serves as cofactor. Post-translationally, is synthesized initially as an inactive proenzyme. Formation of the active enzyme involves a self-maturation process in which the active site pyruvoyl group is generated from an internal serine residue via an autocatalytic post-translational modification. Two non-identical subunits are generated from the proenzyme in this reaction, and the pyruvate is formed at the N-terminus of the alpha chain, which is derived from the carboxyl end of the proenzyme. The post-translation cleavage follows an unusual pathway, termed non-hydrolytic serinolysis, in which the side chain hydroxyl group of the serine supplies its oxygen atom to form the C-terminus of the beta chain, while the remainder of the serine residue undergoes an oxidative deamination to produce ammonia and the pyruvoyl prosthetic group on the alpha chain.

The protein resides in the cell membrane. The catalysed reaction is a 1,2-diacyl-sn-glycero-3-phospho-L-serine + H(+) = a 1,2-diacyl-sn-glycero-3-phosphoethanolamine + CO2. It participates in phospholipid metabolism; phosphatidylethanolamine biosynthesis; phosphatidylethanolamine from CDP-diacylglycerol: step 2/2. In terms of biological role, catalyzes the formation of phosphatidylethanolamine (PtdEtn) from phosphatidylserine (PtdSer). The chain is Phosphatidylserine decarboxylase proenzyme from Afipia carboxidovorans (strain ATCC 49405 / DSM 1227 / KCTC 32145 / OM5) (Oligotropha carboxidovorans).